A 198-amino-acid polypeptide reads, in one-letter code: Imidazole glycerol phosphate synthase subunit HisH (198 aa).

One can recognise a Glutamine amidotransferase type-1 domain in the interval 2-198 (KALLIDYGSG…ALARRYFEVL (197 aa)). C80 (nucleophile) is an active-site residue. Active-site residues include H176 and E178.

As to quaternary structure, heterodimer of HisH and HisF.

It localises to the cytoplasm. It carries out the reaction 5-[(5-phospho-1-deoxy-D-ribulos-1-ylimino)methylamino]-1-(5-phospho-beta-D-ribosyl)imidazole-4-carboxamide + L-glutamine = D-erythro-1-(imidazol-4-yl)glycerol 3-phosphate + 5-amino-1-(5-phospho-beta-D-ribosyl)imidazole-4-carboxamide + L-glutamate + H(+). The enzyme catalyses L-glutamine + H2O = L-glutamate + NH4(+). It functions in the pathway amino-acid biosynthesis; L-histidine biosynthesis; L-histidine from 5-phospho-alpha-D-ribose 1-diphosphate: step 5/9. Its function is as follows. IGPS catalyzes the conversion of PRFAR and glutamine to IGP, AICAR and glutamate. The HisH subunit catalyzes the hydrolysis of glutamine to glutamate and ammonia as part of the synthesis of IGP and AICAR. The resulting ammonia molecule is channeled to the active site of HisF. In Thermus thermophilus (strain ATCC BAA-163 / DSM 7039 / HB27), this protein is Imidazole glycerol phosphate synthase subunit HisH.